The sequence spans 477 residues: ATP synthase subunit beta (477 aa).

Residue 155 to 162 (GGAGVGKT) coordinates ATP.

Belongs to the ATPase alpha/beta chains family. F-type ATPases have 2 components, CF(1) - the catalytic core - and CF(0) - the membrane proton channel. CF(1) has five subunits: alpha(3), beta(3), gamma(1), delta(1), epsilon(1). CF(0) has three main subunits: a(1), b(2) and c(9-12). The alpha and beta chains form an alternating ring which encloses part of the gamma chain. CF(1) is attached to CF(0) by a central stalk formed by the gamma and epsilon chains, while a peripheral stalk is formed by the delta and b chains.

The protein resides in the cell inner membrane. The enzyme catalyses ATP + H2O + 4 H(+)(in) = ADP + phosphate + 5 H(+)(out). Produces ATP from ADP in the presence of a proton gradient across the membrane. The catalytic sites are hosted primarily by the beta subunits. The polypeptide is ATP synthase subunit beta (Mesorhizobium japonicum (strain LMG 29417 / CECT 9101 / MAFF 303099) (Mesorhizobium loti (strain MAFF 303099))).